A 118-amino-acid polypeptide reads, in one-letter code: Large ribosomal subunit protein bL20 (118 aa).

This sequence belongs to the bacterial ribosomal protein bL20 family.

Functionally, binds directly to 23S ribosomal RNA and is necessary for the in vitro assembly process of the 50S ribosomal subunit. It is not involved in the protein synthesizing functions of that subunit. This chain is Large ribosomal subunit protein bL20, found in Francisella tularensis subsp. novicida (strain U112).